Reading from the N-terminus, the 145-residue chain is Basic phospholipase A2 beta-bungarotoxin A2 chain (145 aa).

An N-terminal signal peptide occupies residues 1–17 (MLIFLWCGAVCVSLLGA). Residues 18–25 (ANIPPHPL) constitute a propeptide that is removed on maturation. 6 disulfides stabilise this stretch: Cys52–Cys144, Cys54–Cys70, Cys69–Cys125, Cys76–Cys118, Cys86–Cys111, and Cys104–Cys116. The Ca(2+) site is built by Tyr53, Gly55, and Gly57. Residue His73 is part of the active site. A Ca(2+)-binding site is contributed by Asp74. Residue Asp119 is part of the active site.

This sequence belongs to the phospholipase A2 family. Group I subfamily. D49 sub-subfamily. Heterodimer; disulfide-linked. The A chains have phospholipase A2 activity and the B chains show homology with the basic protease inhibitors. The A2 chain is found in beta-3 and beta-4 bungarotoxins. It depends on Ca(2+) as a cofactor. In terms of tissue distribution, expressed by the venom gland.

Its subcellular location is the secreted. The catalysed reaction is a 1,2-diacyl-sn-glycero-3-phosphocholine + H2O = a 1-acyl-sn-glycero-3-phosphocholine + a fatty acid + H(+). Its function is as follows. Snake venom phospholipase A2 (PLA2) that inhibits neuromuscular transmission by blocking acetylcholine release from the nerve termini. PLA2 catalyzes the calcium-dependent hydrolysis of the 2-acyl groups in 3-sn-phosphoglycerides. The sequence is that of Basic phospholipase A2 beta-bungarotoxin A2 chain from Bungarus multicinctus (Many-banded krait).